Here is a 1374-residue protein sequence, read N- to C-terminus: F-actin-uncapping protein LRRC16A (1374 aa).

N-acetylmethionine is present on M1. The residue at position 122 (S122) is a Phosphoserine. LRR repeat units lie at residues 245–269 (SNRLEELVLENAGLRIDFAQKLAGA), 275–298 (NSGLHTINLAGNSLEDRGVSSLSI), 304–327 (PKGLKHLNLSKTSLSPKGVNSLCQ), 336–363 (ASTLTHLDLSGNALRGDDLSHMYNFLAQ), 391–418 (LQCLAVLNLSRSVFSHRKGKEVPPSFKQ), 423–447 (SLALIQINLSGTKLSPEPLKALLLG), 485–510 (IHNITSLDISDNGLESDLSTLIVWLS), 547–570 (DSPLQSLSLADSKLKAEVTIIINA), 574–597 (NTSLTKVDISGNGMGDMGAKMLAK), and 658–682 (LQKIENYLLRNHETRKYLQEQAYRL). A coiled-coil region spans residues 714-738 (GDAIQEDLKAAERLMRDAKNSKTLL). T920 bears the Phosphothreonine mark. Disordered stretches follow at residues 961–982 (PFPSVRQEKRSSGLISELPSEE) and 1040–1374 (KMDC…FIFV). The LRR 11 repeat unit spans residues 962–985 (FPSVRQEKRSSGLISELPSEEGRR). The inhibits capping activity of CP stretch occupies residues 962–1084 (FPSVRQEKRS…LIKSRSRSER (123 aa)). S972 bears the Phosphoserine mark. Over residues 1040 to 1064 (KMDCKRSSSRSSDAHELGEGDEKKK) the composition is skewed to basic and acidic residues. The interval 1058 to 1092 (EGDEKKKRDSRRSGFLNLIKSRSRSERPPTVLMTE) is necessary for localization at the cell membrane. Phosphoserine is present on S1096. Composition is skewed to basic and acidic residues over residues 1108 to 1132 (TTRKEIKAAEHNGAPDRTEEIKTPE) and 1141 to 1150 (EAGRAERSDS). The span at 1191 to 1204 (VISQDPSSPVSCNT) shows a compositional bias: polar residues. The residue at position 1229 (T1229) is a Phosphothreonine. Basic and acidic residues predominate over residues 1232–1244 (KNAKAEPRVDGGC). Positions 1245–1263 (RSRSSSSMPTSPKPLLQSP) are enriched in low complexity. 7 positions are modified to phosphoserine: S1281, S1289, S1291, S1295, S1319, S1328, and S1335. Residues 1317–1330 (QNSSQSSPRSFSQE) show a composition bias toward low complexity. Residues 1343–1356 (QEQKQRSSGKDGHQ) show a composition bias toward basic and acidic residues. S1363 is subject to Phosphoserine.

It belongs to the CARMIL family. As to quaternary structure, homodimer. Interacts (via C-terminus) with heterodimeric capping protein (CP); this interaction uncaps barbed ends capped by CP, enhances barbed-end actin polymerization and promotes lamellipodial formation and cell migration. Interacts with MYO1E. Interacts with TRIO.

The protein resides in the cytoplasm. It is found in the cytoskeleton. Its subcellular location is the cell membrane. The protein localises to the cell projection. It localises to the lamellipodium. Its function is as follows. Cell membrane-cytoskeleton-associated protein that plays a role in the regulation of actin polymerization at the barbed end of actin filaments. Prevents F-actin heterodimeric capping protein (CP) activity at the leading edges of migrating cells, and hence generates uncapped barbed ends and enhances actin polymerization, however, seems unable to nucleate filaments. Plays a role in lamellipodial protrusion formations and cell migration. This Mus musculus (Mouse) protein is F-actin-uncapping protein LRRC16A.